Reading from the N-terminus, the 551-residue chain is Probable 4-coumarate--CoA ligase 1 (551 aa).

ATP contacts are provided by serine 205, serine 206, glycine 207, threonine 208, threonine 209, and lysine 213. Tyrosine 253 is a (E)-4-coumaroyl-AMP binding site. CoA is bound at residue lysine 274. Residues 276 to 346 (EPVRFLELIQ…RFKGRLVIKQ (71 aa)) form an SBD1 region. (E)-4-coumaroyl-AMP is bound by residues alanine 323, glutamine 346, glycine 347, and threonine 351. The ATP site is built by glutamine 346, glycine 347, threonine 351, aspartate 430, and arginine 445. Positions 347–409 (GYGATELSPA…IKGPNVMLGY (63 aa)) are SBD2. Positions 447 and 451 each coordinate (E)-4-coumaroyl-AMP. Residues lysine 453 and glycine 454 each contribute to the CoA site. Lysine 537 contributes to the ATP binding site.

Belongs to the ATP-dependent AMP-binding enzyme family. Requires Mg(2+) as cofactor.

The catalysed reaction is (E)-4-coumarate + ATP + CoA = (E)-4-coumaroyl-CoA + AMP + diphosphate. It catalyses the reaction (E)-4-coumarate + ATP + H(+) = (E)-4-coumaroyl-AMP + diphosphate. It carries out the reaction (E)-4-coumaroyl-AMP + CoA = (E)-4-coumaroyl-CoA + AMP + H(+). Its pathway is phytoalexin biosynthesis; 3,4',5-trihydroxystilbene biosynthesis; 3,4',5-trihydroxystilbene from trans-4-coumarate: step 1/2. In terms of biological role, carboxylate--CoA ligase that may use 4-coumarate as substrate. Follows a two-step reaction mechanism, wherein the carboxylate substrate first undergoes adenylation by ATP, followed by a thioesterification in the presence of CoA to yield the final CoA thioester. This is Probable 4-coumarate--CoA ligase 1 (4cl1) from Dictyostelium discoideum (Social amoeba).